An 828-amino-acid chain; its full sequence is Toll-like receptor 4 (828 aa).

A signal peptide spans 1-23 (MMSASRLAGTLIPAMAFLSCVRP). Residues 24 to 629 (ESWEPCVVPN…SLNITCQMNK (606 aa)) are Extracellular-facing. A disulfide bond links Cys-29 and Cys-38. N-linked (GlcNAc...) asparagine glycosylation occurs at Asn-33. 5 LRR repeats span residues 53 to 74 (STKN…SFFS), 77 to 98 (ELQV…AYQS), 101 to 122 (HLST…AFSG), 125 to 146 (SLQK…PIGH), and 149 to 170 (TLKE…EYFS). Asn-171 carries an N-linked (GlcNAc...) asparagine glycan. LRR repeat units lie at residues 174-195 (NLEH…DLQV), 203-223 (NLSL…AFKE), and 225-245 (RLHK…KTCI). N-linked (GlcNAc...) asparagine glycosylation is present at Asn-203. Cys-279 and Cys-304 are joined by a disulfide. 2 N-linked (GlcNAc...) asparagine glycosylation sites follow: Asn-280 and Asn-307. LRR repeat units follow at residues 372-392 (SLEF…CSQS), 398-420 (SLKY…LGLE), 421-442 (QLEH…SVFL), 446-454 (NLIYLDISH), 470-493 (SLKV…FTEL), 495-516 (NLTF…AFNS), 519-540 (SLQV…PYKC), and 543-563 (SLQV…QELQ). Cysteines 388 and 389 form a disulfide. Asn-495 and Asn-524 each carry an N-linked (GlcNAc...) asparagine glycan. Residue Asn-573 is glycosylated (N-linked (GlcNAc...) asparagine). Residues 577–627 (NDFACTCEHQSFLQWIKDQRQLLVEVERMECATPSDKQGMPVLSLNITCQM) enclose the LRRCT domain. Disulfide bonds link Cys-581–Cys-607 and Cys-583–Cys-625. N-linked (GlcNAc...) asparagine glycans are attached at residues Asn-622 and Asn-628. Residues 630-650 (TVIGVSVFSVLVVSVVAVLVY) traverse the membrane as a helical segment. Over 651 to 828 (KFYFHLMLLA…WNPEGTVGTG (178 aa)) the chain is Cytoplasmic. The 144-residue stretch at 670–813 (NTYDAFVIYS…IFWRRLRKAL (144 aa)) folds into the TIR domain.

It belongs to the Toll-like receptor family. Belongs to the lipopolysaccharide (LPS) receptor, a multi-protein complex containing at least CD14, LY96 and TLR4. Binding to bacterial LPS leads to homodimerization. Interacts with LY96 via the extracellular domain. Interacts with MYD88 and TIRAP via their respective TIR domains. Interacts with TICAM2. Interacts with NOX4. Interacts with CNPY3 and HSP90B1; this interaction is required for proper folding in the endoplasmic reticulum. Interacts with MAP3K21; this interaction leads to negative regulation of TLR4 signaling. Interacts with CD36, following CD36 stimulation by oxLDL or amyloid-beta 42, and forms a heterodimer with TLR6. The trimeric complex is internalized and triggers inflammatory response. LYN kinase activity facilitates TLR4-TLR6 heterodimerization and signal initiation. Interacts with TICAM1 in response to LPS in a WDFY1-dependent manner. Interacts with WDFY1 in response to LPS. Interacts with SMPDL3B. Interacts with CEACAM1; upon lipopolysaccharide stimulation, forms a complex including TLR4 and the phosphorylated form of SYK and CEACAM1, which in turn, recruits PTPN6 that dephosphorylates SYK, reducing the production of reactive oxygen species (ROS) and lysosome disruption, which in turn, reduces the activity of the inflammasome. Interacts with RFTN1; the interaction occurs in response to lipopolysaccharide stimulation. Interacts with SCIMP; the interaction occurs in response to lipopolysaccharide stimulation and is enhanced by phosphorylation of SCIMP by LYN. This interaction facilitates the phosphorylation of TLR4 by LYN which elicits a selective cytokine response in macrophages. Interacts with TRAF3IP3. Interacts with TREM1; this interaction enhances TLR4-mediated inflammatory response. Interacts with ZG16B/PAUF. Interacts with CD82; this interaction inhibits TLR4-mediated signaling pathway. Post-translationally, phosphorylated on tyrosine residues by LYN after binding lipopolysaccharide. Ubiquitinated by RNF128 via 'Lys-28'-linked polyubiquitin chains, leading to proteasomal degradation.

It localises to the cell membrane. Its subcellular location is the early endosome. The protein localises to the cell projection. The protein resides in the ruffle. In terms of biological role, transmembrane receptor that functions as a pattern recognition receptor recognizing pathogen- and damage-associated molecular patterns (PAMPs and DAMPs) to induce innate immune responses via downstream signaling pathways. At the plasma membrane, cooperates with LY96 to mediate the innate immune response to bacterial lipopolysaccharide (LPS). Also involved in LPS-independent inflammatory responses triggered by free fatty acids, such as palmitate, and Ni(2+). Mechanistically, acts via MYD88, TIRAP and TRAF6, leading to NF-kappa-B activation, cytokine secretion and the inflammatory response. Alternatively, CD14-mediated TLR4 internalization via endocytosis is associated with the initiation of a MYD88-independent signaling via the TICAM1-TBK1-IRF3 axis leading to type I interferon production. In addition to the secretion of proinflammatory cytokines, initiates the activation of NLRP3 inflammasome and formation of a positive feedback loop between autophagy and NF-kappa-B signaling cascade. In complex with TLR6, promotes inflammation in monocytes/macrophages by associating with TLR6 and the receptor CD86. Upon ligand binding, such as oxLDL or amyloid-beta 42, the TLR4:TLR6 complex is internalized and triggers inflammatory response, leading to NF-kappa-B-dependent production of CXCL1, CXCL2 and CCL9 cytokines, via MYD88 signaling pathway, and CCL5 cytokine, via TICAM1 signaling pathway. In myeloid dendritic cells, vesicular stomatitis virus glycoprotein G but not LPS promotes the activation of IRF7, leading to type I IFN production in a CD14-dependent manner. In Pongo pygmaeus (Bornean orangutan), this protein is Toll-like receptor 4 (TLR4).